The chain runs to 633 residues: MIKVTFLAEQKVKEYSGRVTGFDILQPDALREAIAFKVNGELYDLSREIESDTEIEVIQLSDEAGLDIIRHDAAHIMAQAVKELFPNTQITIGPTIQDGFYYDFATDRTFTTDDLAAIEKKMKEIIKSNHRFVREVWTRKQAIDFFSDIGERYKVDIVSSIPENENLTVYKQGNFVDLCRGPHSPSTGRVKAFKLMKVAGAYWRGDSKGPMLQRIYGTAWRNKDELNTYLKRLEEAEKRDHRKIAKDMDLFHIQEEAVGQIFWHEQGYTLYNVLESYIRKKLMNNGYFEVKTPILVSKELWEKSGHWDKFRENMFIIDESESKKLAIKPMNCPCHVQIFNSHIRSYRDLPIRMAEFGTCHRNESSGSLHGLMRVRGFTQDDAHIFCMEKQVNSETVKFCDLLKEVYSELGFNEISVKFSDRPDTRSGNDEVWDRAERALLEAVKEAGLSYELNPGEGAFYGPKLEFILKDAIGRNWQCGTLQVDFILPERLGAFYIGTDGHKHHPVMLHRAILGTFERFIGILIENYAGKFPVWLAPTQLAILTITNESDGYATEISNVLKEQGVRIKTDLTNEKISYKIRLHSSSKVPILWIIGKNEVTNKTVSVRNLGSEKQESFSLENATELLLKIINLN.

The region spanning 1-59 (MIKVTFLAEQKVKEYSGRVTGFDILQPDALREAIAFKVNGELYDLSREIESDTEIEVIQ) is the TGS domain. Residues 240-532 (DHRKIAKDMD…LIENYAGKFP (293 aa)) are catalytic. Residues Cys-332, His-383, and His-509 each coordinate Zn(2+).

This sequence belongs to the class-II aminoacyl-tRNA synthetase family. As to quaternary structure, homodimer. Zn(2+) is required as a cofactor.

The protein localises to the cytoplasm. The enzyme catalyses tRNA(Thr) + L-threonine + ATP = L-threonyl-tRNA(Thr) + AMP + diphosphate + H(+). Its function is as follows. Catalyzes the attachment of threonine to tRNA(Thr) in a two-step reaction: L-threonine is first activated by ATP to form Thr-AMP and then transferred to the acceptor end of tRNA(Thr). Also edits incorrectly charged L-seryl-tRNA(Thr). This Wolbachia pipientis subsp. Culex pipiens (strain wPip) protein is Threonine--tRNA ligase.